The chain runs to 362 residues: Histidinol-phosphate aminotransferase 2 (362 aa).

At K222 the chain carries N6-(pyridoxal phosphate)lysine.

The protein belongs to the class-II pyridoxal-phosphate-dependent aminotransferase family. Histidinol-phosphate aminotransferase subfamily. Homodimer. Requires pyridoxal 5'-phosphate as cofactor.

The enzyme catalyses L-histidinol phosphate + 2-oxoglutarate = 3-(imidazol-4-yl)-2-oxopropyl phosphate + L-glutamate. Its pathway is amino-acid biosynthesis; L-histidine biosynthesis; L-histidine from 5-phospho-alpha-D-ribose 1-diphosphate: step 7/9. This chain is Histidinol-phosphate aminotransferase 2, found in Carboxydothermus hydrogenoformans (strain ATCC BAA-161 / DSM 6008 / Z-2901).